The following is a 527-amino-acid chain: Bifunctional purine biosynthesis protein PurH (527 aa).

The region spanning 1–149 (MASDFLPVRR…KNFARVAVAT (149 aa)) is the MGS-like domain.

Belongs to the PurH family.

It catalyses the reaction (6R)-10-formyltetrahydrofolate + 5-amino-1-(5-phospho-beta-D-ribosyl)imidazole-4-carboxamide = 5-formamido-1-(5-phospho-D-ribosyl)imidazole-4-carboxamide + (6S)-5,6,7,8-tetrahydrofolate. The enzyme catalyses IMP + H2O = 5-formamido-1-(5-phospho-D-ribosyl)imidazole-4-carboxamide. Its pathway is purine metabolism; IMP biosynthesis via de novo pathway; 5-formamido-1-(5-phospho-D-ribosyl)imidazole-4-carboxamide from 5-amino-1-(5-phospho-D-ribosyl)imidazole-4-carboxamide (10-formyl THF route): step 1/1. It functions in the pathway purine metabolism; IMP biosynthesis via de novo pathway; IMP from 5-formamido-1-(5-phospho-D-ribosyl)imidazole-4-carboxamide: step 1/1. In Xanthomonas oryzae pv. oryzae (strain PXO99A), this protein is Bifunctional purine biosynthesis protein PurH.